The primary structure comprises 319 residues: Methionyl-tRNA formyltransferase (319 aa).

113 to 116 (SLLP) contributes to the (6S)-5,6,7,8-tetrahydrofolate binding site.

The protein belongs to the Fmt family.

It catalyses the reaction L-methionyl-tRNA(fMet) + (6R)-10-formyltetrahydrofolate = N-formyl-L-methionyl-tRNA(fMet) + (6S)-5,6,7,8-tetrahydrofolate + H(+). Its function is as follows. Attaches a formyl group to the free amino group of methionyl-tRNA(fMet). The formyl group appears to play a dual role in the initiator identity of N-formylmethionyl-tRNA by promoting its recognition by IF2 and preventing the misappropriation of this tRNA by the elongation apparatus. In Pseudomonas fluorescens (strain Pf0-1), this protein is Methionyl-tRNA formyltransferase.